Here is a 385-residue protein sequence, read N- to C-terminus: Linearmycin resistance permease protein LnrN (385 aa).

A run of 6 helical transmembrane segments spans residues 22-42, 198-218, 239-259, 274-294, 305-325, and 360-380; these read YLIMFAAPLLLTFVFGSMLSG, AAGFSILFVMLTMMGAAGTIL, IGAGYVLSFFVIGWIQFGILL, AAVIVLVSLFLLTVVGIGLMI, LAFGNLFVIATCMVSGMYWPI, and DILGICGILLAFAAITFAAGL. The ABC transmembrane type-2 domain maps to 163 to 382; the sequence is KTVFAKKHED…AITFAAGLKA (220 aa).

It belongs to the ABC-2 integral membrane protein family. As to quaternary structure, the complex is composed of two ATP-binding proteins (LnrL) and two transmembrane proteins (LnrM and LnrN).

The protein localises to the cell membrane. Required for resistance to linearmycins, a family of antibiotic-specialized metabolites produced by some streptomycetes. Part of the ABC transporter complex LnrLMN that probably facilitates linearmycin removal from the membrane. Responsible for the translocation of the substrate across the membrane. Also mediates KinC-dependent biofilm morphology. The polypeptide is Linearmycin resistance permease protein LnrN (Bacillus subtilis (strain 168)).